The primary structure comprises 130 residues: Small ribosomal subunit protein uS11 (130 aa).

Positions 1-21 (MAPQSKRSGGRKQKKHVPNGV) are disordered. Residues 8–17 (SGGRKQKKHV) are compositionally biased toward basic residues.

It belongs to the universal ribosomal protein uS11 family. As to quaternary structure, part of the 30S ribosomal subunit. Interacts with proteins S7 and S18. Binds to IF-3.

Functionally, located on the platform of the 30S subunit, it bridges several disparate RNA helices of the 16S rRNA. Forms part of the Shine-Dalgarno cleft in the 70S ribosome. This Acaryochloris marina (strain MBIC 11017) protein is Small ribosomal subunit protein uS11.